A 332-amino-acid polypeptide reads, in one-letter code: T-cell leukemia homeobox protein 1 (332 aa).

A DNA-binding region (homeobox) is located at residues 203–262 (KKKPRTSFTRLQICELEKRFHRQKYLASAERAALAKALKMTDAQVKTWFQNRRTKWRRQT). At Lys-238 the chain carries N6-acetyllysine.

In terms of tissue distribution, expressed in various embryonic tissues, including branchial arches, some component of the nervous system and spleen.

The protein localises to the nucleus. In terms of biological role, controls the genesis of the spleen. Binds to the DNA sequence 5'-GGCGGTAAGTGG-3'. This is T-cell leukemia homeobox protein 1 (Tlx1) from Mus musculus (Mouse).